Consider the following 385-residue polypeptide: GTP cyclohydrolase 1 type 2 homolog (385 aa).

A divalent metal cation is bound by residues histidine 64, histidine 65, aspartate 103, histidine 333, and glutamate 337.

This sequence belongs to the GTP cyclohydrolase I type 2/NIF3 family. Homohexamer.

The polypeptide is GTP cyclohydrolase 1 type 2 homolog (Mycobacterium leprae (strain TN)).